The following is a 366-amino-acid chain: MTPEHLPTEQYEAQLAEKVVRLQSMMAPFSDLVPEVFRSPVSHYRMRAEFRIWHDGDDLYHIIFDQQTKSRIRVDSFPAASELINQLMTAMIAGVRNNPVLRHKLFQIDYLTTLSNQAVVSLLYHKKLDDEWRQEAEALRDALRAQNLNVHLIGRATKTKIELDQDYIDERLPVAGKEMIYRQVENSFTQPNAAMNIQMLEWALDVTKGSKGDLLELYCGNGNFSLALARNFDRVLATEIAKPSVAAAQYNIAANHIDNVQIIRMAAEEFTQAMNGVREFNRLQGIDLKSYQCETIFVDPPRSGLDGETEKMVQAYPRILYISCNPETLCKNLETLSQTHKVERLALFDQFPYTHHMECGVLLTAK.

S-adenosyl-L-methionine is bound by residues Gln-190, Tyr-218, Asn-223, Glu-239, and Asp-299. Catalysis depends on Cys-324, which acts as the Nucleophile. Glu-358 (proton acceptor) is an active-site residue.

The protein belongs to the class I-like SAM-binding methyltransferase superfamily. RNA M5U methyltransferase family. TrmA subfamily.

The catalysed reaction is uridine(54) in tRNA + S-adenosyl-L-methionine = 5-methyluridine(54) in tRNA + S-adenosyl-L-homocysteine + H(+). It carries out the reaction uridine(341) in tmRNA + S-adenosyl-L-methionine = 5-methyluridine(341) in tmRNA + S-adenosyl-L-homocysteine + H(+). Dual-specificity methyltransferase that catalyzes the formation of 5-methyluridine at position 54 (m5U54) in all tRNAs, and that of position 341 (m5U341) in tmRNA (transfer-mRNA). The polypeptide is tRNA/tmRNA (uracil-C(5))-methyltransferase (Escherichia coli O17:K52:H18 (strain UMN026 / ExPEC)).